A 512-amino-acid chain; its full sequence is Maturase K (512 aa).

The protein belongs to the intron maturase 2 family. MatK subfamily.

It is found in the plastid. Its subcellular location is the chloroplast. Usually encoded in the trnK tRNA gene intron. Probably assists in splicing its own and other chloroplast group II introns. This Platanus occidentalis (Sycamore) protein is Maturase K.